A 239-amino-acid chain; its full sequence is tRNA (guanine-N(7)-)-methyltransferase (239 aa).

The S-adenosyl-L-methionine site is built by Glu69, Glu94, Asp121, and Asp144. Residue Asp144 is part of the active site. Substrate is bound at residue Lys148. The interval 150 to 155 (RHNKRR) is interaction with RNA. Substrate-binding positions include Asp180 and 217-220 (TKFE).

The protein belongs to the class I-like SAM-binding methyltransferase superfamily. TrmB family. Monomer.

It carries out the reaction guanosine(46) in tRNA + S-adenosyl-L-methionine = N(7)-methylguanosine(46) in tRNA + S-adenosyl-L-homocysteine. The protein operates within tRNA modification; N(7)-methylguanine-tRNA biosynthesis. In terms of biological role, catalyzes the formation of N(7)-methylguanine at position 46 (m7G46) in tRNA. This chain is tRNA (guanine-N(7)-)-methyltransferase, found in Photorhabdus laumondii subsp. laumondii (strain DSM 15139 / CIP 105565 / TT01) (Photorhabdus luminescens subsp. laumondii).